The primary structure comprises 341 residues: HTH-type sugar sensing transcriptional regulator TrmBL1 (341 aa).

Residues 32–53 constitute a DNA-binding region (H-T-H motif); it reads SKATDVTKESGIPHTRIYDVLS.

Belongs to the transcriptional regulator TrmB family. Homotetramer. Forms homooctamers in the presence of maltotriose or maltose.

With respect to regulation, repressor activity is regulated by binding of different sugars to TrmBL1. Binding of maltose and maltotriose results in derepression of the target genes. However, high sugar concentration results in formation of octamers with high affinity for DNA, which may prevent transcription of target genes. In terms of biological role, global transcriptional repressor of the maltodextrin transport gene cluster (mdxE operon) and most likely of all genes encoding glycolytic enzymes. Acts by binding to the conserved TGM (Thermococcales-Glycolytic-Motif) sequences in their promoter region. Can also interact with non-TGM sequences. This is HTH-type sugar sensing transcriptional regulator TrmBL1 (trmBL1) from Pyrococcus furiosus (strain ATCC 43587 / DSM 3638 / JCM 8422 / Vc1).